We begin with the raw amino-acid sequence, 240 residues long: Protein FATTY ACID EXPORT 2, chloroplastic (240 aa).

A chloroplast-targeting transit peptide spans 1-84; it reads MADLILSSSS…TANCVDSGVK (84 aa). A compositionally biased stretch (gly residues) spans 97–113; sequence GGGIGGDKFGGGGGGGD. The segment at 97–134 is disordered; sequence GGGIGGDKFGGGGGGGDGNDDGGEDDKEESDGKKSTPL. Residues 114-125 are compositionally biased toward acidic residues; it reads GNDDGGEDDKEE. 3 consecutive transmembrane segments (helical) span residues 164–184, 186–206, and 214–234; these read SLLA…QLPT, PVLA…VMGT, and IFPA…YIHG.

Belongs to the TMEM14 family.

The protein resides in the plastid. The protein localises to the chloroplast membrane. Its function is as follows. May be involved in free fatty acids export from the plastids. This is Protein FATTY ACID EXPORT 2, chloroplastic from Arabidopsis thaliana (Mouse-ear cress).